A 753-amino-acid chain; its full sequence is Protein-lysine N-methyltransferase SMYD4 (753 aa).

112–114 provides a ligand contact to S-adenosyl-L-methionine; the sequence is RSA. The region spanning 186-528 is the SET domain; it reads DGVSVYFSSD…AGQEILHCYG (343 aa). C246, C249, C259, C262, C268, C272, H281, and C285 together coordinate Zn(2+). The MYND-type zinc finger occupies 246 to 285; it reads CHHCLSQSLSFVPCPKCSYARYCGESCQKDAWDQWHQWEC. S-adenosyl-L-methionine-binding positions include 467–468 and Y527; that span reads NH.

This sequence belongs to the class V-like SAM-binding methyltransferase superfamily.

The protein resides in the nucleus. Its subcellular location is the cytoplasm. It carries out the reaction L-lysyl-[protein] + S-adenosyl-L-methionine = N(6)-methyl-L-lysyl-[protein] + S-adenosyl-L-homocysteine + H(+). Functionally, protein-lysine N-methyltransferase. Monomethylates PRMT5, modulating its transcriptional activity. May also act as a histone methyltransferase. Plays a critical role in cardiac development. Acts as a key epigenetic regulator of gene expression during cardiac development via its dual activities as a methyltransferase and negative regulator of HDAC1. The chain is Protein-lysine N-methyltransferase SMYD4 (smyd4) from Danio rerio (Zebrafish).